The primary structure comprises 102 residues: Small ribosomal subunit protein uS10 (102 aa).

The protein belongs to the universal ribosomal protein uS10 family. As to quaternary structure, part of the 30S ribosomal subunit.

Its function is as follows. Involved in the binding of tRNA to the ribosomes. In Staphylococcus aureus (strain JH9), this protein is Small ribosomal subunit protein uS10.